Consider the following 143-residue polypeptide: S-protein homolog 11 (143 aa).

Positions 1–20 (MNCFSFSFIIIVLCAGSSNA) are cleaved as a signal peptide.

The protein belongs to the plant self-incompatibility (S1) protein family.

It is found in the secreted. This chain is S-protein homolog 11, found in Arabidopsis thaliana (Mouse-ear cress).